Here is a 118-residue protein sequence, read N- to C-terminus: Large ribosomal subunit protein bL19 (118 aa).

This sequence belongs to the bacterial ribosomal protein bL19 family.

This protein is located at the 30S-50S ribosomal subunit interface and may play a role in the structure and function of the aminoacyl-tRNA binding site. The sequence is that of Large ribosomal subunit protein bL19 from Geobacter metallireducens (strain ATCC 53774 / DSM 7210 / GS-15).